A 693-amino-acid polypeptide reads, in one-letter code: Alpha-glucosidase (693 aa).

Catalysis depends on residues aspartate 320 and glutamate 323. Aspartate 416 serves as the catalytic Proton donor.

This sequence belongs to the glycosyl hydrolase 31 family.

The protein resides in the cytoplasm. It carries out the reaction Hydrolysis of terminal, non-reducing (1-&gt;4)-linked alpha-D-glucose residues with release of alpha-D-glucose.. Its function is as follows. Major soluble alpha-glucosidase. The chain is Alpha-glucosidase (malA) from Saccharolobus solfataricus (strain ATCC 35092 / DSM 1617 / JCM 11322 / P2) (Sulfolobus solfataricus).